Reading from the N-terminus, the 469-residue chain is Type II secretion system protein HxcR (469 aa).

Residue 246–253 (GPTGSGKT) participates in ATP binding.

This sequence belongs to the GSP E family.

It localises to the cytoplasm. The catalysed reaction is ATP + H2O + cellular proteinSide 1 = ADP + phosphate + cellular proteinSide 2.. Its function is as follows. ATPase component of the type II secretion system required for the energy-dependent secretion of extracellular factors from the periplasm. Acts as a molecular motor to provide the energy that is required for the export of proteins. The Hxc system is involved in the secretion of low-molecular-weight alkaline phosphatase L-AP (LapA). Is probably also involved in the secretion of the phosphate-binding protein PstS. The polypeptide is Type II secretion system protein HxcR (Pseudomonas aeruginosa (strain ATCC 15692 / DSM 22644 / CIP 104116 / JCM 14847 / LMG 12228 / 1C / PRS 101 / PAO1)).